We begin with the raw amino-acid sequence, 427 residues long: Serine--tRNA ligase (427 aa).

235–237 (TAE) serves as a coordination point for L-serine. ATP-binding positions include 266–268 (RRE) and Val282. Glu289 contacts L-serine. Residue 353–356 (EASS) coordinates ATP. Residue Ser389 coordinates L-serine.

The protein belongs to the class-II aminoacyl-tRNA synthetase family. Type-1 seryl-tRNA synthetase subfamily. As to quaternary structure, homodimer. The tRNA molecule binds across the dimer.

The protein resides in the cytoplasm. The enzyme catalyses tRNA(Ser) + L-serine + ATP = L-seryl-tRNA(Ser) + AMP + diphosphate + H(+). It catalyses the reaction tRNA(Sec) + L-serine + ATP = L-seryl-tRNA(Sec) + AMP + diphosphate + H(+). It participates in aminoacyl-tRNA biosynthesis; selenocysteinyl-tRNA(Sec) biosynthesis; L-seryl-tRNA(Sec) from L-serine and tRNA(Sec): step 1/1. In terms of biological role, catalyzes the attachment of serine to tRNA(Ser). Is also able to aminoacylate tRNA(Sec) with serine, to form the misacylated tRNA L-seryl-tRNA(Sec), which will be further converted into selenocysteinyl-tRNA(Sec). The sequence is that of Serine--tRNA ligase from Chlorobaculum parvum (strain DSM 263 / NCIMB 8327) (Chlorobium vibrioforme subsp. thiosulfatophilum).